The sequence spans 437 residues: Cobyrinate a,c-diamide synthase (437 aa).

The GATase cobBQ-type domain occupies Ile243 to Gly433. The active-site Nucleophile is the Cys324.

This sequence belongs to the CobB/CbiA family. The cofactor is Mg(2+).

It carries out the reaction cob(II)yrinate + 2 L-glutamine + 2 ATP + 2 H2O = cob(II)yrinate a,c diamide + 2 L-glutamate + 2 ADP + 2 phosphate + 2 H(+). It functions in the pathway cofactor biosynthesis; adenosylcobalamin biosynthesis; cob(II)yrinate a,c-diamide from sirohydrochlorin (anaerobic route): step 10/10. Functionally, catalyzes the ATP-dependent amidation of the two carboxylate groups at positions a and c of cobyrinate, using either L-glutamine or ammonia as the nitrogen source. The chain is Cobyrinate a,c-diamide synthase from Sulfurisphaera tokodaii (strain DSM 16993 / JCM 10545 / NBRC 100140 / 7) (Sulfolobus tokodaii).